A 1403-amino-acid chain; its full sequence is E3 ubiquitin-protein ligase SNT2 (1403 aa).

Positions 40 to 62 (SGAKTKGSNSQTPRNCKRTSNPA) are disordered. Positions 45–62 (KGSNSQTPRNCKRTSNPA) are enriched in polar residues. In terms of domain architecture, BAH spans 121–258 (VLLSANDTIY…RYTLKYYKVY (138 aa)). Residues 317–369 (DKRCQFCKEWCIQKESLSCDECGVCAHLYCMDPPLDRKPNKDVVWTCFSCLQK) form a PHD-type 1 zinc finger. Residues 555–606 (LKEPSFTAVEIRKFEEAVEKFGSELRPVCEYVGTQPMSMIVRFYYNWKKTER) enclose the SANT domain. Residues 1038-1097 (RTFCSVCKEKFNDNDNYEVVCGNCGLTVHYFCYAIKLPKDMKKNTNLKTFKWLCDPCSND) form a PHD-type 2 zinc finger. The RING-type; degenerate zinc-finger motif lies at 1041 to 1095 (CSVCKEKFNDNDNYEVVCGNCGLTVHYFCYAIKLPKDMKKNTNLKTFKWLCDPCS). A C2HC pre-PHD-type zinc finger spans residues 1105–1153 (TYQCSMCPTKDYDYDRYRSQSFKICPDALKCTSLGTWVHLVCSLFNEDI). The segment at 1177 to 1231 (FTCGVCRINGGGLVKCNKCQYRYHITCAQNSSNFKLMFEKKNMSVDTTLPCIKDV) adopts a PHD-type 3; degenerate zinc-finger fold.

Component of the Snt2C complex composed of SNT2, ECM5 and RPD3. Interacts with the E2 ubiquitin-conjugating enzyme UBC4 and histones H3 and H4. Binding is enhanced to methylated histone H3K36me3.

The protein resides in the cytoplasm. The protein localises to the nucleus. It carries out the reaction S-ubiquitinyl-[E2 ubiquitin-conjugating enzyme]-L-cysteine + [acceptor protein]-L-lysine = [E2 ubiquitin-conjugating enzyme]-L-cysteine + N(6)-ubiquitinyl-[acceptor protein]-L-lysine.. Transcriptional regulator that, together with ECM5, recruits histone deacetylase RPD3 to a small number of promoters of stress-response genes in response to oxidative stress. Probable ubiquitin-protein ligase involved in the degradation-related ubiquitination of histones. Contributes to the post-translational regulation of histone protein levels by polyubiquitination of excess histones for subsequent degradation. This chain is E3 ubiquitin-protein ligase SNT2, found in Saccharomyces cerevisiae (strain ATCC 204508 / S288c) (Baker's yeast).